Reading from the N-terminus, the 512-residue chain is Delta(14)-sterol reductase (512 aa).

Helical transmembrane passes span 27-47, 100-120, 140-160, 172-192, 242-262, 278-298, 324-344, and 353-373; these read IGAS…GFLC, AVLG…LLPA, ACLS…VRGP, YIQL…YVYL, SFME…AFAA, WTPL…VIIS, FGFM…SIQA, and ALGP…YYIF. NADP(+) is bound by residues Lys380, Arg384, Leu407, Trp412, and 419 to 420; that span reads NY. 2 helical membrane passes run 418–438 and 458–478; these read INYL…LAAG and MKGA…ILLI. NADP(+)-binding positions include Asp484, 488–492, and Tyr499; that span reads CRRKY.

It belongs to the ERG4/ERG24 family.

The protein localises to the membrane. It carries out the reaction 4,4-dimethyl-5alpha-cholesta-8,24-dien-3beta-ol + NADP(+) = 4,4-dimethyl-5alpha-cholesta-8,14,24-trien-3beta-ol + NADPH + H(+). It participates in steroid biosynthesis; zymosterol biosynthesis; zymosterol from lanosterol: step 2/6. Functionally, reduces the C14=C15 double bond of 4,4-dimethyl-cholesta-8,14,24-trienol to produce 4,4-dimethyl-cholesta-8,24-dienol. The chain is Delta(14)-sterol reductase (ERG3) from Septoria lycopersici (Tomato leaf spot fungus).